Here is a 602-residue protein sequence, read N- to C-terminus: Solute carrier organic anion transporter family member 1C1 (602 aa).

The Cytoplasmic portion of the chain corresponds to 1-43 (MDTSSKENIQLFCKTSVQPVGRPSFKTEYPSSEEKQPCCGELK). The chain crosses the membrane as a helical span at residues 44 to 63 (VFLGALSFVYFAKALAEGYL). Residues 64–82 (KSTITQIERRFDIPSSLVG) are Extracellular-facing. The helical transmembrane segment at 83-103 (VIDGSFEIGNLLVITFVSYFG) threads the bilayer. The Cytoplasmic portion of the chain corresponds to 104 to 109 (AKLHRP). Residues 110–134 (KIIGAGCLIMGVGTLLIAMPQFFME) traverse the membrane as a helical segment. Residues 135–139 (QYKYE) are Extracellular-facing. The helical transmembrane segment at 140 to 156 (IYSPSSNSTLSISPCLL) threads the bilayer. Residues 157 to 238 (ESSSQLPVSV…ARDFLPSLKY (82 aa)) are Cytoplasmic-facing. A disordered region spans residues 190–216 (PRSQSREDSNSSSEKSKFIRDDHTDYQ). Over residues 193–214 (QSREDSNSSSEKSKFIRDDHTD) the composition is skewed to basic and acidic residues. The helical transmembrane segment at 239–260 (LFGNPVYFLYLCTSTVQFNSLF) threads the bilayer. The Extracellular segment spans residues 261-280 (GMVTYKPKYIEQQYGQSSSR). A helical membrane pass occupies residues 281–304 (ANFVIGLINIPAVALGIFSGGIAM). Residues 305–308 (KKFR) are Cytoplasmic-facing. A helical membrane pass occupies residues 309–332 (ISVCGAAKLYLGSSVFGYLLFLSL). Residues 333 to 444 (FALGCENSDV…NGCPQMFLYF (112 aa)) are Extracellular-facing. The 56-residue stretch at 360-415 (RALFSDCNPRCKCSETKWEPMCGENGITYVSACPAGCQTSNRSGKNIIFYNCTCVG) folds into the Kazal-like domain. 3 disulfide bridges follow: Cys-366–Cys-396, Cys-372–Cys-392, and Cys-381–Cys-413. N-linked (GlcNAc...) asparagine glycosylation is found at Asn-400, Asn-410, and Asn-423. Residues 445 to 467 (LVISVITSYTLSLGGIPGYILLL) traverse the membrane as a helical segment. Residues 468 to 476 (RCIKPQLKS) are Cytoplasmic-facing. Residues 477 to 502 (FALGIYTLSIRVLAGIPAPVYFGVLI) traverse the membrane as a helical segment. Residues 503–536 (DTSCLKWGFKRCGSRGSCRLYDSNVFRHIYLGLT) lie on the Extracellular side of the membrane. The chain crosses the membrane as a helical span at residues 537–554 (VILGTVSIFLSIAVLFIL). The Cytoplasmic portion of the chain corresponds to 555 to 602 (KKNYVSKHRNFITKRERTMVSTRFQKENCTTSDHLLQPKYWPGKETQL).

It belongs to the organo anion transporter (TC 2.A.60) family.

The protein localises to the cell membrane. The catalysed reaction is 3,3',5'-triiodo-L-thyronine(out) = 3,3',5'-triiodo-L-thyronine(in). The enzyme catalyses L-thyroxine(out) = L-thyroxine(in). It carries out the reaction L-thyroxine sulfate(out) = L-thyroxine sulfate(in). Its function is as follows. Mediates the Na(+)-independent high affinity transport of organic anions such as the thyroid hormones L-thyroxine (T4), L-thyroxine sulfate (T4S), and 3,3',5'-triiodo-L-thyronine (reverse T3, rT3) at the plasma membrane. Regulates T4 levels in different brain regions by transporting T4, and also by serving as an export pump for T4S, which is a source of T4 after hydrolysis by local sulfatases. Increases the access of these substrates to the intracellular sites where they are metabolized by the deiodinases. Other potential substrates, such as triiodothyronine (T3), 17-beta-glucuronosyl estradiol (17beta-estradiol 17-O-(beta-D-glucuronate)), estrone-3-sulfate (E1S) and sulfobromophthalein (BSP) are transported with much lower efficiency. Transports T4 and E1S in a pH-insensitive manner. Facilitates the transport of thyroid hormones across the blood-brain barrier and into glia and neuronal cells in the brain. The protein is Solute carrier organic anion transporter family member 1C1 (SLCO1C1) of Macaca fascicularis (Crab-eating macaque).